The primary structure comprises 514 residues: GMP synthase [glutamine-hydrolyzing] (514 aa).

The 191-residue stretch at 7–197 folds into the Glutamine amidotransferase type-1 domain; the sequence is KVLILDFGSQ…LFNICKCERN (191 aa). Cysteine 84 functions as the Nucleophile in the catalytic mechanism. Active-site residues include histidine 171 and glutamate 173. Residues 198–389 enclose the GMPS ATP-PPase domain; sequence WNMGSFIEYE…LKLPEDIVYR (192 aa). 225 to 231 lines the ATP pocket; sequence SGGVDSS.

In terms of assembly, homodimer.

The enzyme catalyses XMP + L-glutamine + ATP + H2O = GMP + L-glutamate + AMP + diphosphate + 2 H(+). Its pathway is purine metabolism; GMP biosynthesis; GMP from XMP (L-Gln route): step 1/1. Catalyzes the synthesis of GMP from XMP. The polypeptide is GMP synthase [glutamine-hydrolyzing] (Brachyspira hyodysenteriae (strain ATCC 49526 / WA1)).